A 149-amino-acid chain; its full sequence is UPF0208 membrane protein VSAL_I2111 (149 aa).

Transmembrane regions (helical) follow at residues 41–61 (FAVK…MVFN) and 69–89 (SIII…WLGN).

It belongs to the UPF0208 family.

The protein resides in the cell inner membrane. This chain is UPF0208 membrane protein VSAL_I2111, found in Aliivibrio salmonicida (strain LFI1238) (Vibrio salmonicida (strain LFI1238)).